A 147-amino-acid chain; its full sequence is AP-2 complex subunit sigma (147 aa).

It belongs to the adaptor complexes small subunit family. In terms of assembly, adaptor protein complex 2 (AP-2) is a heterotetramer composed of two large adaptins (alpha-type subunit APL3 and beta-type subunit APL1), a medium chain (mu-type subunit APM4) and a small adaptin (sigma-type subunit APS2). Interacts with APL1.

The protein resides in the cell membrane. It is found in the membrane. It localises to the coated pit. In terms of biological role, component of the adaptor complexes which link clathrin to receptors in coated vesicles. Clathrin-associated protein complexes are believed to interact with the cytoplasmic tails of membrane proteins, leading to their selection and concentration. In Saccharomyces cerevisiae (strain ATCC 204508 / S288c) (Baker's yeast), this protein is AP-2 complex subunit sigma (APS2).